We begin with the raw amino-acid sequence, 457 residues long: Cell division protein FtsZ (457 aa).

GTP contacts are provided by residues 26 to 30 (GGGGN), 115 to 117 (GTG), Glu-146, Lys-150, and Asp-193. A compositionally biased stretch (basic and acidic residues) spans 429–447 (KKDVVRSEESERPAFESER). The interval 429-457 (KKDVVRSEESERPAFESERSSSPTTISFN) is disordered. Polar residues predominate over residues 448–457 (SSSPTTISFN).

This sequence belongs to the FtsZ family. As to quaternary structure, homodimer. Polymerizes to form a dynamic ring structure in a strictly GTP-dependent manner. Interacts directly with several other division proteins.

It localises to the cytoplasm. In terms of biological role, essential cell division protein that forms a contractile ring structure (Z ring) at the future cell division site. The regulation of the ring assembly controls the timing and the location of cell division. One of the functions of the FtsZ ring is to recruit other cell division proteins to the septum to produce a new cell wall between the dividing cells. Binds GTP and shows GTPase activity. This Porphyromonas gingivalis (strain ATCC BAA-308 / W83) protein is Cell division protein FtsZ.